Consider the following 451-residue polypeptide: Tubby-like F-box protein 12 (451 aa).

In terms of domain architecture, F-box spans 57-112; that stretch reads SRWVGLPPELLRDVMKRLEEGESNWPSRKDVVACAAVCRTWREICKDIVQSPEICG. Positions 387–406 are enriched in low complexity; the sequence is LEQQQQQQQQNHASSSSSAS. Residues 387–407 form a disordered region; sequence LEQQQQQQQQNHASSSSSASD.

This sequence belongs to the TUB family. In terms of tissue distribution, ubiquitous.

This chain is Tubby-like F-box protein 12 (TULP12), found in Oryza sativa subsp. japonica (Rice).